A 364-amino-acid polypeptide reads, in one-letter code: MKIDGRPYRTIFPEPGGDAVCVIDQTRLPFAFEIRRLTTAEEAAEAIRTMVVRGAPLIGVTAAYGLALGLRRDPSDAGLERIAAMLAATRPTAVNLRWALERLSGILRPLPPDTRAPQAFAEAGRIAEEDVANCRAIGEHGARLIAQTAAKGRRVNVLTHCNAGWLATVDWGTALAPIYVAHDAGVPVHVFVDETRPRNQGAALTAFELNAHGVPHTVVADNAGGHLMQHGGVDLCIVGSDRTTSTGDVCNKIGTYLKALAAFDNGVPFYAALPVSTIDWTLTDGVAGIPIEERDGREVTHLTGRTEDGGFATIQVVSPGSPVANPAFDVTPARLVTGLITERGVAEATEEGLLRLYPERRKAA.

Residues Arg-53 to Ala-55, Arg-90, and Gln-200 each bind substrate. Catalysis depends on Asp-241, which acts as the Proton donor. Asn-251–Lys-252 provides a ligand contact to substrate.

It belongs to the eIF-2B alpha/beta/delta subunits family. MtnA subfamily.

It carries out the reaction 5-(methylsulfanyl)-alpha-D-ribose 1-phosphate = 5-(methylsulfanyl)-D-ribulose 1-phosphate. It participates in amino-acid biosynthesis; L-methionine biosynthesis via salvage pathway; L-methionine from S-methyl-5-thio-alpha-D-ribose 1-phosphate: step 1/6. In terms of biological role, catalyzes the interconversion of methylthioribose-1-phosphate (MTR-1-P) into methylthioribulose-1-phosphate (MTRu-1-P). This Methylobacterium nodulans (strain LMG 21967 / CNCM I-2342 / ORS 2060) protein is Methylthioribose-1-phosphate isomerase.